Reading from the N-terminus, the 446-residue chain is tRNA modification GTPase MnmE (446 aa).

3 residues coordinate (6S)-5-formyl-5,6,7,8-tetrahydrofolate: R24, E81, and K120. In terms of domain architecture, TrmE-type G spans 216–368 (GLHAVLIGPP…LHIRLRELAL (153 aa)). N226 contributes to the K(+) binding site. GTP contacts are provided by residues 226 to 231 (NAGKSS), 245 to 251 (TDVAGTT), and 270 to 273 (DTAG). S230 is a Mg(2+) binding site. T245, V247, and T250 together coordinate K(+). Position 251 (T251) interacts with Mg(2+). K446 is a binding site for (6S)-5-formyl-5,6,7,8-tetrahydrofolate.

It belongs to the TRAFAC class TrmE-Era-EngA-EngB-Septin-like GTPase superfamily. TrmE GTPase family. Homodimer. Heterotetramer of two MnmE and two MnmG subunits. K(+) is required as a cofactor.

Its subcellular location is the cytoplasm. Its function is as follows. Exhibits a very high intrinsic GTPase hydrolysis rate. Involved in the addition of a carboxymethylaminomethyl (cmnm) group at the wobble position (U34) of certain tRNAs, forming tRNA-cmnm(5)s(2)U34. This chain is tRNA modification GTPase MnmE, found in Xanthomonas oryzae pv. oryzae (strain KACC10331 / KXO85).